Here is a 564-residue protein sequence, read N- to C-terminus: Formate--tetrahydrofolate ligase (564 aa).

Residue T65–T72 participates in ATP binding.

This sequence belongs to the formate--tetrahydrofolate ligase family.

The enzyme catalyses (6S)-5,6,7,8-tetrahydrofolate + formate + ATP = (6R)-10-formyltetrahydrofolate + ADP + phosphate. Its pathway is one-carbon metabolism; tetrahydrofolate interconversion. The chain is Formate--tetrahydrofolate ligase from Roseiflexus sp. (strain RS-1).